A 501-amino-acid chain; its full sequence is Lysine--tRNA ligase (501 aa).

Positions 402 and 409 each coordinate Mg(2+).

It belongs to the class-II aminoacyl-tRNA synthetase family. As to quaternary structure, homodimer. The cofactor is Mg(2+).

Its subcellular location is the cytoplasm. It carries out the reaction tRNA(Lys) + L-lysine + ATP = L-lysyl-tRNA(Lys) + AMP + diphosphate. The protein is Lysine--tRNA ligase of Helicobacter pylori (strain HPAG1).